Reading from the N-terminus, the 63-residue chain is Large ribosomal subunit protein uL29 (63 aa).

The protein belongs to the universal ribosomal protein uL29 family.

The polypeptide is Large ribosomal subunit protein uL29 (Klebsiella pneumoniae (strain 342)).